Consider the following 237-residue polypeptide: Pyridoxal 5'-phosphate synthase subunit PdxS (237 aa).

Lysine 19 functions as the Schiff-base intermediate with D-ribose 5-phosphate in the catalytic mechanism. Residue glycine 91 coordinates D-ribose 5-phosphate. Arginine 103 provides a ligand contact to D-glyceraldehyde 3-phosphate. D-ribose 5-phosphate contacts are provided by residues glycine 157 and 178–179 (GS).

This sequence belongs to the PdxS/SNZ family. As to quaternary structure, in the presence of PdxT, forms a dodecamer of heterodimers.

The catalysed reaction is aldehydo-D-ribose 5-phosphate + D-glyceraldehyde 3-phosphate + L-glutamine = pyridoxal 5'-phosphate + L-glutamate + phosphate + 3 H2O + H(+). The protein operates within cofactor biosynthesis; pyridoxal 5'-phosphate biosynthesis. Its function is as follows. Catalyzes the formation of pyridoxal 5'-phosphate from ribose 5-phosphate (RBP), glyceraldehyde 3-phosphate (G3P) and ammonia. The ammonia is provided by the PdxT subunit. Can also use ribulose 5-phosphate and dihydroxyacetone phosphate as substrates, resulting from enzyme-catalyzed isomerization of RBP and G3P, respectively. The protein is Pyridoxal 5'-phosphate synthase subunit PdxS of Methanococcus vannielii.